Here is a 243-residue protein sequence, read N- to C-terminus: 1-(5-phosphoribosyl)-5-[(5-phosphoribosylamino)methylideneamino] imidazole-4-carboxamide isomerase (243 aa).

Asp-10 acts as the Proton acceptor in catalysis. The Proton donor role is filled by Asp-129.

It belongs to the HisA/HisF family.

Its subcellular location is the cytoplasm. The enzyme catalyses 1-(5-phospho-beta-D-ribosyl)-5-[(5-phospho-beta-D-ribosylamino)methylideneamino]imidazole-4-carboxamide = 5-[(5-phospho-1-deoxy-D-ribulos-1-ylimino)methylamino]-1-(5-phospho-beta-D-ribosyl)imidazole-4-carboxamide. It participates in amino-acid biosynthesis; L-histidine biosynthesis; L-histidine from 5-phospho-alpha-D-ribose 1-diphosphate: step 4/9. This Saccharopolyspora erythraea (strain ATCC 11635 / DSM 40517 / JCM 4748 / NBRC 13426 / NCIMB 8594 / NRRL 2338) protein is 1-(5-phosphoribosyl)-5-[(5-phosphoribosylamino)methylideneamino] imidazole-4-carboxamide isomerase.